Here is a 491-residue protein sequence, read N- to C-terminus: Ligand-gated ion channel 50 (491 aa).

The first 19 residues, 1–19 (MRFLLVLQLVFFYFSAATT), serve as a signal peptide directing secretion. N-linked (GlcNAc...) asparagine glycosylation is found at Asn-55 and Asn-101. Cys-157 and Cys-171 form a disulfide bridge. 3 helical membrane passes run 241 to 261 (LFQSYFPTSLTVISSWVGFFF), 265 to 287 (SVSARITLGVSSLLALTFQFGNV), and 302 to 322 (VWMIFSVIFIFCTLVELAIVC). Residue Asn-418 is glycosylated (N-linked (GlcNAc...) asparagine). A helical transmembrane segment spans residues 465–485 (MIMFPLSFLIFNVVYWSIYFM).

Belongs to the ligand-gated ion channel (TC 1.A.9) family.

The protein localises to the postsynaptic cell membrane. It is found in the cell membrane. The sequence is that of Ligand-gated ion channel 50 (lgc-50) from Caenorhabditis elegans.